We begin with the raw amino-acid sequence, 430 residues long: Glucose-1-phosphate adenylyltransferase (430 aa).

Residues Gly-163, 178 to 179 (EK), and Ser-210 each bind alpha-D-glucose 1-phosphate.

The protein belongs to the bacterial/plant glucose-1-phosphate adenylyltransferase family. As to quaternary structure, homotetramer.

The enzyme catalyses alpha-D-glucose 1-phosphate + ATP + H(+) = ADP-alpha-D-glucose + diphosphate. It functions in the pathway glycan biosynthesis; glycogen biosynthesis. Involved in the biosynthesis of ADP-glucose, a building block required for the elongation reactions to produce glycogen. Catalyzes the reaction between ATP and alpha-D-glucose 1-phosphate (G1P) to produce pyrophosphate and ADP-Glc. The polypeptide is Glucose-1-phosphate adenylyltransferase (Synechococcus elongatus (strain ATCC 33912 / PCC 7942 / FACHB-805) (Anacystis nidulans R2)).